The primary structure comprises 892 residues: Protein BNI4 (892 aa).

A phosphoserine mark is found at Ser43 and Ser133. Disordered stretches follow at residues 185-287 and 305-387; these read DFLS…EDTS and KPVI…QDTE. Residues 208-223 show a composition bias toward basic and acidic residues; it reads TILERDNNLPVKREEN. Polar residues-rich tracts occupy residues 224–236 and 270–280; these read TIIN…TTHS and DSSAQRTTSAG. Ser281 is modified (phosphoserine). A compositionally biased stretch (polar residues) spans 309-335; sequence GNNSVTNEKNKMSSSSTFSMNIQTSLK. Residues 346–356 are compositionally biased toward low complexity; that stretch reads SSSSIFNSFLK. The segment covering 357–371 has biased composition (basic and acidic residues); that stretch reads GKIETSDSPRKEPMR. A phosphoserine mark is found at Ser364 and Ser394. Thr410 is subject to Phosphothreonine. Residues Ser476, Ser500, and Ser503 each carry the phosphoserine modification. Disordered regions lie at residues 506–526, 618–644, and 685–734; these read RTRS…RSLT, SDEE…SERQ, and YATE…GDER. Ser618 carries the phosphoserine modification. Residues 624 to 643 show a composition bias toward basic and acidic residues; that stretch reads EVERDVPKPREEPLKKDSER. The residue at position 703 (Thr703) is a Phosphothreonine. Residues 707-719 are compositionally biased toward basic and acidic residues; that stretch reads RNNKEDSYKERET. Phosphoserine occurs at positions 746 and 825.

May interact with CHS3 and seems to be an adapter (along with SKT5) to link CHS3 to septins.

In Saccharomyces cerevisiae (strain ATCC 204508 / S288c) (Baker's yeast), this protein is Protein BNI4 (BNI4).